Here is a 493-residue protein sequence, read N- to C-terminus: Probable cytosol aminopeptidase (493 aa).

Lys258 and Asp263 together coordinate Mn(2+). Lys270 is an active-site residue. Asp281, Asp340, and Glu342 together coordinate Mn(2+). Arg344 is an active-site residue.

The protein belongs to the peptidase M17 family. Requires Mn(2+) as cofactor.

The protein resides in the cytoplasm. It catalyses the reaction Release of an N-terminal amino acid, Xaa-|-Yaa-, in which Xaa is preferably Leu, but may be other amino acids including Pro although not Arg or Lys, and Yaa may be Pro. Amino acid amides and methyl esters are also readily hydrolyzed, but rates on arylamides are exceedingly low.. It carries out the reaction Release of an N-terminal amino acid, preferentially leucine, but not glutamic or aspartic acids.. Functionally, presumably involved in the processing and regular turnover of intracellular proteins. Catalyzes the removal of unsubstituted N-terminal amino acids from various peptides. This chain is Probable cytosol aminopeptidase, found in Caulobacter vibrioides (strain ATCC 19089 / CIP 103742 / CB 15) (Caulobacter crescentus).